Consider the following 43-residue polypeptide: Bacteriocin mundticin (43 aa).

Cysteines 9 and 14 form a disulfide.

This bacteriocin inhibits the growth of several Gram-positive bacteria, especially pathogenic L.monocytogenes and C.botulinum but has no effect on the growth of a number of yeasts and Gram-negative bacteria. This chain is Bacteriocin mundticin, found in Enterococcus mundtii.